Reading from the N-terminus, the 303-residue chain is Mycothiol acetyltransferase (303 aa).

2 consecutive N-acetyltransferase domains span residues Met-1 to Asp-150 and Val-162 to Arg-303. Residue Glu-18 participates in 1D-myo-inositol 2-(L-cysteinylamino)-2-deoxy-alpha-D-glucopyranoside binding. Residue Leu-77–Val-79 participates in acetyl-CoA binding. Glu-189, Lys-229, and Glu-237 together coordinate 1D-myo-inositol 2-(L-cysteinylamino)-2-deoxy-alpha-D-glucopyranoside. Acetyl-CoA is bound by residues Val-241–Val-243 and Gln-248–Arg-254. Residue Tyr-275 participates in 1D-myo-inositol 2-(L-cysteinylamino)-2-deoxy-alpha-D-glucopyranoside binding. Residue Asn-280 to Lys-285 coordinates acetyl-CoA.

Belongs to the acetyltransferase family. MshD subfamily. Monomer.

The enzyme catalyses 1D-myo-inositol 2-(L-cysteinylamino)-2-deoxy-alpha-D-glucopyranoside + acetyl-CoA = mycothiol + CoA + H(+). In terms of biological role, catalyzes the transfer of acetyl from acetyl-CoA to desacetylmycothiol (Cys-GlcN-Ins) to form mycothiol. The protein is Mycothiol acetyltransferase of Saccharopolyspora erythraea (strain ATCC 11635 / DSM 40517 / JCM 4748 / NBRC 13426 / NCIMB 8594 / NRRL 2338).